We begin with the raw amino-acid sequence, 268 residues long: MALVVKGKVNINEFIDLTKMEKILPSMFTPVKSVMCSKVDKIMVHENESLSEVNLLKGVKLIDSGYVCLAGLVVTGEWNLPDNCRGGVSVCLVDKRMERADEATLGSYYTAAAKKRFQFKVVPNYAITTQDAMKNVWQVLVNIRNVKMSAGFCPLSLEFVSVCIVYRNNIKLGLREKITSVRDGGPMELTEEVVDEFMEDVPMSIRLAKFRSRTGKKSDVRKGKISSSDRSAPNKNYRNVKDFGGMSFKKNNLIDDDSETTVAESDSF.

Residues 218–246 form a disordered region; it reads SDVRKGKISSSDRSAPNKNYRNVKDFGGM. Over residues 225 to 237 the composition is skewed to polar residues; sequence ISSSDRSAPNKNY.

It belongs to the tobamovirus movement protein family. As to quaternary structure, binds to host RBCS at the plasmodesmata; this interaction seems required for viral systemic movement. In resistant plants, interacts with host MBP2C at host microtubules; this interaction prevents virus cell to cell movement. In resistant plants, interacts with host resistance (R) protein (e.g. tomato ToMV resistance protein TM-2(2), AC Q71BG9) at the host plasma membrane; this interaction triggers host defense responses leading to programmed cell death.

It localises to the host cytoplasm. It is found in the host cytoskeleton. The protein resides in the host cell junction. Its subcellular location is the host plasmodesma. In terms of biological role, transports viral genome to neighboring plant cells directly through plasmosdesmata, without any budding. The movement protein allows efficient cell to cell propagation, by bypassing the host cell wall barrier. Forms a ribonucleoprotein complex with viral RNA. Binds microtubules and modulates microtubule stability. Can bind double-stranded DNA. Triggers host hypersensitive defense reaction in incompatible plants harboring resistance (R) proteins. The protein is Movement protein (MP) of Nicotiana tabacum (Common tobacco).